The sequence spans 444 residues: Exodeoxyribonuclease 7 large subunit (444 aa).

Belongs to the XseA family. As to quaternary structure, heterooligomer composed of large and small subunits.

The protein resides in the cytoplasm. The catalysed reaction is Exonucleolytic cleavage in either 5'- to 3'- or 3'- to 5'-direction to yield nucleoside 5'-phosphates.. In terms of biological role, bidirectionally degrades single-stranded DNA into large acid-insoluble oligonucleotides, which are then degraded further into small acid-soluble oligonucleotides. In Xylella fastidiosa (strain M23), this protein is Exodeoxyribonuclease 7 large subunit.